A 95-amino-acid chain; its full sequence is Aspartyl/glutamyl-tRNA(Asn/Gln) amidotransferase subunit C (95 aa).

This sequence belongs to the GatC family. In terms of assembly, heterotrimer of A, B and C subunits.

The catalysed reaction is L-glutamyl-tRNA(Gln) + L-glutamine + ATP + H2O = L-glutaminyl-tRNA(Gln) + L-glutamate + ADP + phosphate + H(+). It catalyses the reaction L-aspartyl-tRNA(Asn) + L-glutamine + ATP + H2O = L-asparaginyl-tRNA(Asn) + L-glutamate + ADP + phosphate + 2 H(+). Its function is as follows. Allows the formation of correctly charged Asn-tRNA(Asn) or Gln-tRNA(Gln) through the transamidation of misacylated Asp-tRNA(Asn) or Glu-tRNA(Gln) in organisms which lack either or both of asparaginyl-tRNA or glutaminyl-tRNA synthetases. The reaction takes place in the presence of glutamine and ATP through an activated phospho-Asp-tRNA(Asn) or phospho-Glu-tRNA(Gln). The polypeptide is Aspartyl/glutamyl-tRNA(Asn/Gln) amidotransferase subunit C (Rhizobium leguminosarum bv. trifolii (strain WSM2304)).